The chain runs to 89 residues: Small ribosomal subunit protein uS19 (89 aa).

The protein belongs to the universal ribosomal protein uS19 family.

In terms of biological role, protein S19 forms a complex with S13 that binds strongly to the 16S ribosomal RNA. This Xylella fastidiosa (strain 9a5c) protein is Small ribosomal subunit protein uS19.